Here is a 257-residue protein sequence, read N- to C-terminus: Tryptophan synthase alpha chain (257 aa).

Residues glutamate 47 and aspartate 58 each act as proton acceptor in the active site.

The protein belongs to the TrpA family. Tetramer of two alpha and two beta chains.

The enzyme catalyses (1S,2R)-1-C-(indol-3-yl)glycerol 3-phosphate + L-serine = D-glyceraldehyde 3-phosphate + L-tryptophan + H2O. It functions in the pathway amino-acid biosynthesis; L-tryptophan biosynthesis; L-tryptophan from chorismate: step 5/5. In terms of biological role, the alpha subunit is responsible for the aldol cleavage of indoleglycerol phosphate to indole and glyceraldehyde 3-phosphate. This chain is Tryptophan synthase alpha chain, found in Listeria innocua serovar 6a (strain ATCC BAA-680 / CLIP 11262).